We begin with the raw amino-acid sequence, 227 residues long: Enolase-phosphatase E1 (227 aa).

This sequence belongs to the HAD-like hydrolase superfamily. MasA/MtnC family. Monomer. Mg(2+) serves as cofactor.

It carries out the reaction 5-methylsulfanyl-2,3-dioxopentyl phosphate + H2O = 1,2-dihydroxy-5-(methylsulfanyl)pent-1-en-3-one + phosphate. The protein operates within amino-acid biosynthesis; L-methionine biosynthesis via salvage pathway; L-methionine from S-methyl-5-thio-alpha-D-ribose 1-phosphate: step 3/6. It participates in amino-acid biosynthesis; L-methionine biosynthesis via salvage pathway; L-methionine from S-methyl-5-thio-alpha-D-ribose 1-phosphate: step 4/6. Bifunctional enzyme that catalyzes the enolization of 2,3-diketo-5-methylthiopentyl-1-phosphate (DK-MTP-1-P) into the intermediate 2-hydroxy-3-keto-5-methylthiopentenyl-1-phosphate (HK-MTPenyl-1-P), which is then dephosphorylated to form the acireductone 1,2-dihydroxy-3-keto-5-methylthiopentene (DHK-MTPene). This Pseudomonas syringae pv. tomato (strain ATCC BAA-871 / DC3000) protein is Enolase-phosphatase E1.